A 148-amino-acid polypeptide reads, in one-letter code: MKLRQPMPELTGEKAWLNGEVTREQLIGEKPTLIHFWSISCHLCKEAMPQVNEFRDKYQDQLNVVAVHMPRSEDDLDPGKIKETAAEHDITQPIFVDSDHALTDAFENEYVPAYYVFDKTGQLRHFQAGGSGMKMLEKRVNRVLAETE.

The region spanning 2–145 (KLRQPMPELT…LEKRVNRVLA (144 aa)) is the Thioredoxin domain. Cysteine 41 and cysteine 44 are oxidised to a cystine.

As to quaternary structure, monomer.

It is found in the cytoplasm. Participates in various redox reactions through the reversible oxidation of its active center dithiol to a disulfide and catalyzes dithiol-disulfide exchange reactions. This chain is Thiol-disulfide oxidoreductase YkuV (ykuV), found in Bacillus subtilis (strain 168).